Reading from the N-terminus, the 695-residue chain is Elongation factor G (695 aa).

The tr-type G domain maps to 9-283; that stretch reads EKIRNIGIVA…AVIDYLPSPL (275 aa). GTP is bound by residues 18–25, 82–86, and 136–139; these read AHIDAGKT, DTPGH, and NKMD.

It belongs to the TRAFAC class translation factor GTPase superfamily. Classic translation factor GTPase family. EF-G/EF-2 subfamily.

It localises to the cytoplasm. Catalyzes the GTP-dependent ribosomal translocation step during translation elongation. During this step, the ribosome changes from the pre-translocational (PRE) to the post-translocational (POST) state as the newly formed A-site-bound peptidyl-tRNA and P-site-bound deacylated tRNA move to the P and E sites, respectively. Catalyzes the coordinated movement of the two tRNA molecules, the mRNA and conformational changes in the ribosome. The chain is Elongation factor G from Petrotoga mobilis (strain DSM 10674 / SJ95).